Reading from the N-terminus, the 353-residue chain is Photosystem II protein D1 (353 aa).

The residue at position 2 (threonine 2) is an N-acetylthreonine. A Phosphothreonine modification is found at threonine 2. 3 consecutive transmembrane segments (helical) span residues 29–46, 118–133, and 142–156; these read YIGW…TATS, HFFI…EWEL, and WIAV…AATA. Chlorophyll a is bound at residue histidine 118. Tyrosine 126 lines the pheophytin a pocket. [CaMn4O5] cluster contacts are provided by aspartate 170 and glutamate 189. A helical transmembrane segment spans residues 197–218; that stretch reads FHMLGVAGVFGGSLFSAMHGSL. Residue histidine 198 coordinates chlorophyll a. Residues histidine 215 and 264-265 each bind a quinone; that span reads SF. Residue histidine 215 participates in Fe cation binding. Histidine 272 contacts Fe cation. The chain crosses the membrane as a helical span at residues 274–288; the sequence is FLAIWPVVGIWFTAL. 4 residues coordinate [CaMn4O5] cluster: histidine 332, glutamate 333, aspartate 342, and alanine 344. The propeptide occupies 345-353; it reads SVEAPSING.

It belongs to the reaction center PufL/M/PsbA/D family. PSII is composed of 1 copy each of membrane proteins PsbA, PsbB, PsbC, PsbD, PsbE, PsbF, PsbH, PsbI, PsbJ, PsbK, PsbL, PsbM, PsbT, PsbX, PsbY, PsbZ, Psb30/Ycf12, at least 3 peripheral proteins of the oxygen-evolving complex and a large number of cofactors. It forms dimeric complexes. The cofactor is The D1/D2 heterodimer binds P680, chlorophylls that are the primary electron donor of PSII, and subsequent electron acceptors. It shares a non-heme iron and each subunit binds pheophytin, quinone, additional chlorophylls, carotenoids and lipids. D1 provides most of the ligands for the Mn4-Ca-O5 cluster of the oxygen-evolving complex (OEC). There is also a Cl(-1) ion associated with D1 and D2, which is required for oxygen evolution. The PSII complex binds additional chlorophylls, carotenoids and specific lipids.. Tyr-161 forms a radical intermediate that is referred to as redox-active TyrZ, YZ or Y-Z. In terms of processing, C-terminally processed by CTPA; processing is essential to allow assembly of the oxygen-evolving complex and thus photosynthetic growth.

The protein localises to the plastid. It is found in the chloroplast thylakoid membrane. It carries out the reaction 2 a plastoquinone + 4 hnu + 2 H2O = 2 a plastoquinol + O2. Functionally, photosystem II (PSII) is a light-driven water:plastoquinone oxidoreductase that uses light energy to abstract electrons from H(2)O, generating O(2) and a proton gradient subsequently used for ATP formation. It consists of a core antenna complex that captures photons, and an electron transfer chain that converts photonic excitation into a charge separation. The D1/D2 (PsbA/PsbD) reaction center heterodimer binds P680, the primary electron donor of PSII as well as several subsequent electron acceptors. This chain is Photosystem II protein D1, found in Stigeoclonium helveticum (Green alga).